A 592-amino-acid chain; its full sequence is Malic enzyme, hydrogenosomal (592 aa).

The N-terminal 27 residues, 1-27 (MLAPIQTIARPVSSILPATGALAAKRT), are a transit peptide targeting the hydrogenosome. The Proton donor role is filled by tyrosine 134. 182-205 (VTDGSRILGLGDLGAGGMQIPIGK) provides a ligand contact to NADP(+). Arginine 187 is an NAD(+) binding site. The Proton acceptor role is filled by lysine 205. Residues glutamate 276, aspartate 277, and aspartate 300 each contribute to the a divalent metal cation site. Aspartate 300 is a binding site for NAD(+). 335 to 352 (GAGSSGVGVCETIVDCIV) lines the NADP(+) pocket. NAD(+) is bound at residue asparagine 443.

The protein belongs to the malic enzymes family. Requires Mg(2+) as cofactor. The cofactor is Mn(2+).

The protein localises to the hydrogenosome. The catalysed reaction is (S)-malate + NADP(+) = pyruvate + CO2 + NADPH. It catalyses the reaction oxaloacetate + H(+) = pyruvate + CO2. The chain is Malic enzyme, hydrogenosomal from Neocallimastix frontalis (Rumen fungus).